We begin with the raw amino-acid sequence, 65 residues long: Large ribosomal subunit protein bL31 (65 aa).

Zn(2+)-binding residues include C16, C18, C36, and C39.

This sequence belongs to the bacterial ribosomal protein bL31 family. Type A subfamily. In terms of assembly, part of the 50S ribosomal subunit. Zn(2+) serves as cofactor.

Binds the 23S rRNA. This is Large ribosomal subunit protein bL31 from Desulfitobacterium hafniense (strain DSM 10664 / DCB-2).